The following is a 296-amino-acid chain: Fructose-bisphosphate aldolase class 1 (296 aa).

Glu175 serves as the catalytic Proton acceptor. The Schiff-base intermediate with dihydroxyacetone-P role is filled by Lys212.

It belongs to the class I fructose-bisphosphate aldolase family.

The enzyme catalyses beta-D-fructose 1,6-bisphosphate = D-glyceraldehyde 3-phosphate + dihydroxyacetone phosphate. The protein operates within carbohydrate degradation; glycolysis; D-glyceraldehyde 3-phosphate and glycerone phosphate from D-glucose: step 4/4. The sequence is that of Fructose-bisphosphate aldolase class 1 from Staphylococcus aureus (strain USA300).